The sequence spans 131 residues: MWNEFKKFAIRGNVIDLAVGVIIGGAFGKIVSSLVNDIIMPLVGLILGGINFSDLSWKVGKAEVKYGAFIQTVVDFLIIAFSIFLFVKLINTLYERVKKQEEVKETAPTLTKEEELLTEIRDLLKQQRETT.

The next 3 membrane-spanning stretches (helical) occupy residues 8–28 (FAIRGNVIDLAVGVIIGGAFG), 30–50 (IVSSLVNDIIMPLVGLILGGI), and 67–87 (GAFIQTVVDFLIIAFSIFLFV).

It belongs to the MscL family. In terms of assembly, homopentamer.

It is found in the cell membrane. Its function is as follows. Channel that opens in response to stretch forces in the membrane lipid bilayer. May participate in the regulation of osmotic pressure changes within the cell. The protein is Large-conductance mechanosensitive channel of Geobacillus kaustophilus (strain HTA426).